An 881-amino-acid polypeptide reads, in one-letter code: DNA mismatch repair protein MutS (881 aa).

626-633 contacts ATP; that stretch reads GPNMAGKS.

It belongs to the DNA mismatch repair MutS family.

In terms of biological role, this protein is involved in the repair of mismatches in DNA. It is possible that it carries out the mismatch recognition step. This protein has a weak ATPase activity. In Desulfosudis oleivorans (strain DSM 6200 / JCM 39069 / Hxd3) (Desulfococcus oleovorans), this protein is DNA mismatch repair protein MutS.